Consider the following 263-residue polypeptide: Ubiquinone/menaquinone biosynthesis C-methyltransferase UbiE (263 aa).

Positions 86, 107, and 152 each coordinate S-adenosyl-L-methionine.

This sequence belongs to the class I-like SAM-binding methyltransferase superfamily. MenG/UbiE family.

The catalysed reaction is a 2-demethylmenaquinol + S-adenosyl-L-methionine = a menaquinol + S-adenosyl-L-homocysteine + H(+). It carries out the reaction a 2-methoxy-6-(all-trans-polyprenyl)benzene-1,4-diol + S-adenosyl-L-methionine = a 5-methoxy-2-methyl-3-(all-trans-polyprenyl)benzene-1,4-diol + S-adenosyl-L-homocysteine + H(+). Its pathway is quinol/quinone metabolism; menaquinone biosynthesis; menaquinol from 1,4-dihydroxy-2-naphthoate: step 2/2. The protein operates within cofactor biosynthesis; ubiquinone biosynthesis. Methyltransferase required for the conversion of demethylmenaquinol (DMKH2) to menaquinol (MKH2) and the conversion of 2-polyprenyl-6-methoxy-1,4-benzoquinol (DDMQH2) to 2-polyprenyl-3-methyl-6-methoxy-1,4-benzoquinol (DMQH2). This chain is Ubiquinone/menaquinone biosynthesis C-methyltransferase UbiE, found in Brucella anthropi (strain ATCC 49188 / DSM 6882 / CCUG 24695 / JCM 21032 / LMG 3331 / NBRC 15819 / NCTC 12168 / Alc 37) (Ochrobactrum anthropi).